The primary structure comprises 457 residues: ATP synthase subunit beta (457 aa).

147-154 (GGAGVGKT) contacts ATP.

It belongs to the ATPase alpha/beta chains family. In terms of assembly, F-type ATPases have 2 components, CF(1) - the catalytic core - and CF(0) - the membrane proton channel. CF(1) has five subunits: alpha(3), beta(3), gamma(1), delta(1), epsilon(1). CF(0) has three main subunits: a(1), b(2) and c(9-12). The alpha and beta chains form an alternating ring which encloses part of the gamma chain. CF(1) is attached to CF(0) by a central stalk formed by the gamma and epsilon chains, while a peripheral stalk is formed by the delta and b chains.

The protein resides in the cell inner membrane. It carries out the reaction ATP + H2O + 4 H(+)(in) = ADP + phosphate + 5 H(+)(out). Produces ATP from ADP in the presence of a proton gradient across the membrane. The catalytic sites are hosted primarily by the beta subunits. In Actinobacillus pleuropneumoniae serotype 3 (strain JL03), this protein is ATP synthase subunit beta.